The primary structure comprises 309 residues: Probable manganese-dependent inorganic pyrophosphatase (309 aa).

Mn(2+) contacts are provided by H9, D13, D15, D75, H97, and D149.

The protein belongs to the PPase class C family. Mn(2+) serves as cofactor.

It is found in the cytoplasm. The catalysed reaction is diphosphate + H2O = 2 phosphate + H(+). The chain is Probable manganese-dependent inorganic pyrophosphatase from Bacillus cereus (strain G9842).